A 1188-amino-acid polypeptide reads, in one-letter code: DNA-directed RNA polymerase subunit beta (1188 aa).

It belongs to the RNA polymerase beta chain family. As to quaternary structure, the RNAP catalytic core consists of 2 alpha, 1 beta, 1 beta' and 1 omega subunit. When a sigma factor is associated with the core the holoenzyme is formed, which can initiate transcription.

It catalyses the reaction RNA(n) + a ribonucleoside 5'-triphosphate = RNA(n+1) + diphosphate. Functionally, DNA-dependent RNA polymerase catalyzes the transcription of DNA into RNA using the four ribonucleoside triphosphates as substrates. The protein is DNA-directed RNA polymerase subunit beta of Streptococcus pyogenes serotype M18 (strain MGAS8232).